A 72-amino-acid chain; its full sequence is UPF0337 protein bsl2407 (72 aa).

The tract at residues 1–55 (MGSTTDKIKGNANEAIGKAKQGIGEATGSDRLKGEGVVQEVKGKGQQAMGDAKDA) is disordered. The span at 35-47 (EGVVQEVKGKGQQ) shows a compositional bias: low complexity.

This sequence belongs to the UPF0337 (CsbD) family.

The sequence is that of UPF0337 protein bsl2407 from Bradyrhizobium diazoefficiens (strain JCM 10833 / BCRC 13528 / IAM 13628 / NBRC 14792 / USDA 110).